The sequence spans 175 residues: Coagulogen (175 aa).

Cystine bridges form between Cys8–Cys167, Cys10–Cys95, Cys60–Cys161, Cys65–Cys121, Cys75–Cys168, Cys88–Cys140, Cys127–Cys170, and Cys134–Cys172.

It belongs to the coagulin family. In terms of assembly, coagulogen is cleaved after Arg-18 and Arg-46 by a clotting enzyme contained in the hemocyte and activated by a bacterial endotoxin (lipopolysaccharide). This cleavage releases the peptide C and leaves 2 chains of coagulin, A and B, linked by two disulfide bonds. Coagulin molecules interlink to form a gel. In terms of tissue distribution, hemolymph.

The protein localises to the secreted. In terms of biological role, coagulogen is a gel-forming protein of hemolymph; it hinders the spread of invaders by immobilizing them. This chain is Coagulogen, found in Carcinoscorpius rotundicauda (Mangrove horseshoe crab).